The following is an 87-amino-acid chain: MAEKTFTITAETGIHARPATQLVNKAGQYSSEITLEYKGKAVNLKSIMGVMSLGVGKGAQVTIKAEGSDEAEALKGIEEVIKEGLGE.

One can recognise an HPr domain in the interval 1 to 87 (MAEKTFTITA…EEVIKEGLGE (87 aa)). Catalysis depends on H15, which acts as the Pros-phosphohistidine intermediate. S46 carries the post-translational modification Phosphoserine; by HPrK/P.

Belongs to the HPr family.

The protein resides in the cytoplasm. Phosphorylation on Ser-46 inhibits the phosphoryl transfer from enzyme I to HPr. Its function is as follows. General (non sugar-specific) component of the phosphoenolpyruvate-dependent sugar phosphotransferase system (sugar PTS). This major carbohydrate active-transport system catalyzes the phosphorylation of incoming sugar substrates concomitantly with their translocation across the cell membrane. The phosphoryl group from phosphoenolpyruvate (PEP) is transferred to the phosphoryl carrier protein HPr by enzyme I. Phospho-HPr then transfers it to the PTS EIIA domain. P-Ser-HPr interacts with the catabolite control protein A (CcpA), forming a complex that binds to DNA at the catabolite response elements cre, operator sites preceding a large number of catabolite-regulated genes. Thus, P-Ser-HPr is a corepressor in carbon catabolite repression (CCR), a mechanism that allows bacteria to coordinate and optimize the utilization of available carbon sources. P-Ser-HPr also plays a role in inducer exclusion, in which it probably interacts with several non-PTS permeases and inhibits their transport activity. The polypeptide is Phosphocarrier protein HPr (ptsH) (Halalkalibacterium halodurans (strain ATCC BAA-125 / DSM 18197 / FERM 7344 / JCM 9153 / C-125) (Bacillus halodurans)).